A 94-amino-acid polypeptide reads, in one-letter code: Small ribosomal subunit protein uS19 (94 aa).

The protein belongs to the universal ribosomal protein uS19 family.

Protein S19 forms a complex with S13 that binds strongly to the 16S ribosomal RNA. This Wolbachia sp. subsp. Brugia malayi (strain TRS) protein is Small ribosomal subunit protein uS19.